The chain runs to 101 residues: Small ribosomal subunit protein uS14 (101 aa).

The protein belongs to the universal ribosomal protein uS14 family. In terms of assembly, part of the 30S ribosomal subunit. Contacts proteins S3 and S10.

In terms of biological role, binds 16S rRNA, required for the assembly of 30S particles and may also be responsible for determining the conformation of the 16S rRNA at the A site. The polypeptide is Small ribosomal subunit protein uS14 (Bartonella henselae (strain ATCC 49882 / DSM 28221 / CCUG 30454 / Houston 1) (Rochalimaea henselae)).